The primary structure comprises 237 residues: Phosphoribosylaminoimidazole-succinocarboxamide synthase (237 aa).

It belongs to the SAICAR synthetase family.

It carries out the reaction 5-amino-1-(5-phospho-D-ribosyl)imidazole-4-carboxylate + L-aspartate + ATP = (2S)-2-[5-amino-1-(5-phospho-beta-D-ribosyl)imidazole-4-carboxamido]succinate + ADP + phosphate + 2 H(+). It functions in the pathway purine metabolism; IMP biosynthesis via de novo pathway; 5-amino-1-(5-phospho-D-ribosyl)imidazole-4-carboxamide from 5-amino-1-(5-phospho-D-ribosyl)imidazole-4-carboxylate: step 1/2. The polypeptide is Phosphoribosylaminoimidazole-succinocarboxamide synthase (Listeria monocytogenes serotype 4a (strain HCC23)).